We begin with the raw amino-acid sequence, 1940 residues long: Cilia- and flagella-associated protein 74 (1940 aa).

The disordered stretch occupies residues 52-90 (GSPAVTLRRAKAAAAANGTSSPGIRGSPSPARGPGGRLP). Low complexity predominate over residues 63–90 (AAAAANGTSSPGIRGSPSPARGPGGRLP). The stretch at 100–159 (ANVEQLKRRLQTVVAEVEGHQQRYDKVLLEANKATDLVHSMEAEIESLYVEAEELARRVP) forms a coiled coil. 5 disordered regions span residues 512 to 548 (VAGLGRGGGSDDEDGMGSPPRSPSLTQQLAATQQSLT), 1159 to 1336 (SPHV…AAAE), 1373 to 1418 (PQSQ…AAPP), 1714 to 1737 (AGDKPSTPAPGIKPPATPPGGASK), and 1894 to 1940 (PGSR…KKAV). The span at 535–548 (SLTQQLAATQQSLT) shows a compositional bias: low complexity. Positions 1205–1220 (DGGGGGAMANGNGSGG) are enriched in gly residues. Residues 1227 to 1236 (DGEPEDGEGD) are compositionally biased toward acidic residues. A compositionally biased stretch (gly residues) spans 1260-1271 (GRGGRGGRGGAA). Acidic residues predominate over residues 1272 to 1282 (GEDEDEDEDAG). Low complexity predominate over residues 1287-1304 (RGKSSSSSKASSGRRSSS). Acidic residues predominate over residues 1321-1335 (VPDDDDADAEAEAAA). The span at 1373–1414 (PQSQNPTPSQSQSGQAPAASAPSDGASGAAAAAETAASSGPA) shows a compositional bias: low complexity. Composition is skewed to pro residues over residues 1720 to 1731 (TPAPGIKPPATP) and 1896 to 1912 (SRPPGEPVPPGVTPAPE). Residues 1913–1929 (PVAASGPGAGAAGVKKL) are compositionally biased toward low complexity. Residues 1930 to 1940 (VPPPSPPKKAV) are compositionally biased toward pro residues.

Belongs to the CFAP74 family. As to quaternary structure, part of the PDCP1 complex composed of CFAP46, CFAP54, CFAP74 and CFAP221; the PDCP1 complex binds calmodulin.

It localises to the cytoplasm. It is found in the cytoskeleton. The protein localises to the cilium axoneme. In terms of biological role, as part of the central apparatus of the cilium axoneme may play a role in cilium movement and thereby cell motility. The sequence is that of Cilia- and flagella-associated protein 74 from Chlamydomonas reinhardtii (Chlamydomonas smithii).